We begin with the raw amino-acid sequence, 273 residues long: 2,3,4,5-tetrahydropyridine-2,6-dicarboxylate N-succinyltransferase (273 aa).

The substrate site is built by Arg104 and Asp141.

Belongs to the transferase hexapeptide repeat family. Homotrimer.

It is found in the cytoplasm. It catalyses the reaction (S)-2,3,4,5-tetrahydrodipicolinate + succinyl-CoA + H2O = (S)-2-succinylamino-6-oxoheptanedioate + CoA. The protein operates within amino-acid biosynthesis; L-lysine biosynthesis via DAP pathway; LL-2,6-diaminopimelate from (S)-tetrahydrodipicolinate (succinylase route): step 1/3. This Psychrobacter arcticus (strain DSM 17307 / VKM B-2377 / 273-4) protein is 2,3,4,5-tetrahydropyridine-2,6-dicarboxylate N-succinyltransferase.